Here is a 203-residue protein sequence, read N- to C-terminus: Small ribosomal subunit protein uS10m (203 aa).

Residues 1-14 constitute a mitochondrion transit peptide; sequence MLRNTIALRSFIRT. Serine 193 is subject to Phosphoserine.

It belongs to the universal ribosomal protein uS10 family. Component of the mitochondrial small ribosomal subunit (mt-SSU). Mature yeast 74S mitochondrial ribosomes consist of a small (37S) and a large (54S) subunit. The 37S small subunit contains a 15S ribosomal RNA (15S mt-rRNA) and 34 different proteins. The 54S large subunit contains a 21S rRNA (21S mt-rRNA) and 46 different proteins.

The protein localises to the mitochondrion. Its function is as follows. Component of the mitochondrial ribosome (mitoribosome), a dedicated translation machinery responsible for the synthesis of mitochondrial genome-encoded proteins, including at least some of the essential transmembrane subunits of the mitochondrial respiratory chain. The mitoribosomes are attached to the mitochondrial inner membrane and translation products are cotranslationally integrated into the membrane. The protein is Small ribosomal subunit protein uS10m (RSM10) of Saccharomyces cerevisiae (strain ATCC 204508 / S288c) (Baker's yeast).